The primary structure comprises 352 residues: MSDHSFSAVSAVQALKWSDGGLEVLDQRLLPGDVVYQIFDTAAGVAEAIASMRVRGAPAIGIAAAYGVVLGARAAYARDPAHWKRAVEDDIAVLARSRPTAVNLFWALERMREAMAAIEGDPVPALLAAARRIHEDDLAANLAMGELGAAILGGCKGVLTHCNTGALATGGYGTALGVIRSTWRRGALERVYATETRPWSQGARLTVWELGQDRIPATLLADSAAAWLMKSGAVQWVVVGADRIAANGDVANKIGTYSLAVLARHHGVKLMVVAPISTVDWATATGEDIVVEERDPRELLHPLFLGSDSVIGAWNPVFDVTPAALIDAIVTEAGVVTNPSPDTMATLRGKAR.

Substrate contacts are provided by residues 55–57, arginine 98, and glutamine 201; that span reads RGA. Aspartate 242 acts as the Proton donor in catalysis. 252 to 253 provides a ligand contact to substrate; it reads NK.

The protein belongs to the eIF-2B alpha/beta/delta subunits family. MtnA subfamily.

The enzyme catalyses 5-(methylsulfanyl)-alpha-D-ribose 1-phosphate = 5-(methylsulfanyl)-D-ribulose 1-phosphate. The protein operates within amino-acid biosynthesis; L-methionine biosynthesis via salvage pathway; L-methionine from S-methyl-5-thio-alpha-D-ribose 1-phosphate: step 1/6. Its function is as follows. Catalyzes the interconversion of methylthioribose-1-phosphate (MTR-1-P) into methylthioribulose-1-phosphate (MTRu-1-P). The polypeptide is Methylthioribose-1-phosphate isomerase (Methylococcus capsulatus (strain ATCC 33009 / NCIMB 11132 / Bath)).